The sequence spans 327 residues: Mitochondrial coenzyme A transporter SLC25A42 (327 aa).

Solcar repeat units lie at residues 34 to 120 (KSVL…YKKL), 132 to 217 (LTPI…LKKL), and 227 to 315 (PYTF…TQIL). The next 6 helical transmembrane spans lie at 36–56 (VLNS…AVAP), 92–112 (LWRG…IQFC), 138–158 (LLAG…LDLV), 192–209 (GFTP…ISFF), 233–253 (LLFG…LDVV), and 296–316 (VKGP…QILL).

The protein belongs to the mitochondrial carrier (TC 2.A.29) family.

The protein resides in the mitochondrion inner membrane. It carries out the reaction ADP(out) + CoA(in) = ADP(in) + CoA(out). The catalysed reaction is 3'-dephospho-CoA(in) + ADP(out) = 3'-dephospho-CoA(out) + ADP(in). It catalyses the reaction adenosine 3',5'-bisphosphate(in) + ADP(out) = adenosine 3',5'-bisphosphate(out) + ADP(in). The enzyme catalyses AMP(in) + ADP(out) = AMP(out) + ADP(in). It carries out the reaction dADP(in) + ADP(out) = dADP(out) + ADP(in). The catalysed reaction is ADP(in) + ATP(out) = ADP(out) + ATP(in). Its function is as follows. Mitochondrial carrier mediating the transport of coenzyme A (CoA) in mitochondria in exchange for intramitochondrial (deoxy)adenine nucleotides and adenosine 3',5'-diphosphate. The protein is Mitochondrial coenzyme A transporter SLC25A42 (slc25a42) of Xenopus laevis (African clawed frog).